We begin with the raw amino-acid sequence, 427 residues long: Glutamate-1-semialdehyde 2,1-aminomutase (427 aa).

At Lys-265 the chain carries N6-(pyridoxal phosphate)lysine.

This sequence belongs to the class-III pyridoxal-phosphate-dependent aminotransferase family. HemL subfamily. In terms of assembly, homodimer. Pyridoxal 5'-phosphate serves as cofactor.

The protein localises to the cytoplasm. It carries out the reaction (S)-4-amino-5-oxopentanoate = 5-aminolevulinate. It functions in the pathway porphyrin-containing compound metabolism; protoporphyrin-IX biosynthesis; 5-aminolevulinate from L-glutamyl-tRNA(Glu): step 2/2. This is Glutamate-1-semialdehyde 2,1-aminomutase from Burkholderia cenocepacia (strain ATCC BAA-245 / DSM 16553 / LMG 16656 / NCTC 13227 / J2315 / CF5610) (Burkholderia cepacia (strain J2315)).